A 388-amino-acid chain; its full sequence is Processive diacylglycerol beta-glucosyltransferase (388 aa).

The protein belongs to the glycosyltransferase 28 family. UgtP subfamily.

The protein resides in the cell membrane. The catalysed reaction is a 1,2-diacyl-3-O-(beta-D-glucopyranosyl)-sn-glycerol + UDP-alpha-D-glucose = a 1,2-diacyl-3-O-(beta-D-Glc-(1-&gt;6)-beta-D-Glc)-sn-glycerol + UDP + H(+). It carries out the reaction a 1,2-diacyl-3-O-(beta-D-Glc-(1-&gt;6)-beta-D-Glc)-sn-glycerol + UDP-alpha-D-glucose = a 1,2-diacyl-3-O-(beta-D-Glc-(1-&gt;6)-beta-D-Glc-(1-&gt;6)-beta-D-Glc)-sn-glycerol + UDP + H(+). It catalyses the reaction a 1,2-diacyl-sn-glycerol + UDP-alpha-D-glucose = a 1,2-diacyl-3-O-(beta-D-glucopyranosyl)-sn-glycerol + UDP + H(+). Its pathway is glycolipid metabolism; diglucosyl-diacylglycerol biosynthesis. Its function is as follows. Processive glucosyltransferase involved in the biosynthesis of both the bilayer- and non-bilayer-forming membrane glucolipids. Is able to successively transfer up to three glucosyl residues to diacylglycerol (DAG), thereby catalyzing the formation of beta-monoglucosyl-DAG (3-O-(beta-D-glucopyranosyl)-1,2-diacyl-sn-glycerol), beta-diglucosyl-DAG (3-O-(beta-D-glucopyranosyl-beta-(1-&gt;6)-D-glucopyranosyl)-1,2-diacyl-sn-glycerol) and beta-triglucosyl-DAG (3-O-(beta-D-glucopyranosyl-beta-(1-&gt;6)-D-glucopyranosyl-beta-(1-&gt;6)-D-glucopyranosyl)-1,2-diacyl-sn-glycerol). Beta-diglucosyl-DAG is the predominant glycolipid found in Bacillales and is also used as a membrane anchor for lipoteichoic acid (LTA). The chain is Processive diacylglycerol beta-glucosyltransferase from Bacillus cereus (strain AH187).